Reading from the N-terminus, the 800-residue chain is Ribosome-releasing factor 2, mitochondrial (800 aa).

The tr-type G domain occupies 21–307 (SKVRNIGIIA…AIANYLPSPS (287 aa)). Residues 30-37 (AHIDAGKT), 95-99 (DTPGH), and 147-150 (NKMD) each bind GTP.

It belongs to the TRAFAC class translation factor GTPase superfamily. Classic translation factor GTPase family. EF-G/EF-2 subfamily.

The protein resides in the mitochondrion. Its function is as follows. Mitochondrial GTPase that mediates the disassembly of ribosomes from messenger RNA at the termination of mitochondrial protein biosynthesis. Not involved in the GTP-dependent ribosomal translocation step during translation elongation. This chain is Ribosome-releasing factor 2, mitochondrial, found in Kluyveromyces lactis (strain ATCC 8585 / CBS 2359 / DSM 70799 / NBRC 1267 / NRRL Y-1140 / WM37) (Yeast).